Here is a 329-residue protein sequence, read N- to C-terminus: uncharacterized protein (329 aa).

Coiled-coil stretches lie at residues Lys57 to Val119 and Ala224 to Val250.

This is an uncharacterized protein from Macaca fascicularis (Crab-eating macaque).